Reading from the N-terminus, the 493-residue chain is Glutamyl-tRNA(Gln) amidotransferase subunit A (493 aa).

Residues K79 and S159 each act as charge relay system in the active site. S183 serves as the catalytic Acyl-ester intermediate.

This sequence belongs to the amidase family. GatA subfamily. Heterotrimer of A, B and C subunits.

It catalyses the reaction L-glutamyl-tRNA(Gln) + L-glutamine + ATP + H2O = L-glutaminyl-tRNA(Gln) + L-glutamate + ADP + phosphate + H(+). Allows the formation of correctly charged Gln-tRNA(Gln) through the transamidation of misacylated Glu-tRNA(Gln) in organisms which lack glutaminyl-tRNA synthetase. The reaction takes place in the presence of glutamine and ATP through an activated gamma-phospho-Glu-tRNA(Gln). The chain is Glutamyl-tRNA(Gln) amidotransferase subunit A from Brucella melitensis biotype 2 (strain ATCC 23457).